A 350-amino-acid polypeptide reads, in one-letter code: Ceramide synthase 1 (350 aa).

An N-acetylalanine modification is found at Ala2. The next 6 membrane-spanning stretches (helical) occupy residues 53–73 (AHLA…WTAL), 103–123 (AWKF…LFGT), 148–168 (IAAA…ATLY), 176–196 (SVVM…SYAF), 239–259 (AADL…LYWF), and 287–307 (LLLL…AFAA). A TLC domain is found at 97–311 (AKMPESAWKF…IVAFAAKVLT (215 aa)).

Acetylated. Deacetylation by SIRT3 increases enzyme activity and promotes mitochondrial ceramide accumulation.

It localises to the endoplasmic reticulum membrane. The enzyme catalyses a sphingoid base + octadecanoyl-CoA = an N-octadecanoyl-sphingoid base + CoA + H(+). The catalysed reaction is sphinganine + octadecanoyl-CoA = N-(octadecanoyl)-sphinganine + CoA + H(+). It catalyses the reaction hexadecasphinganine + octadecanoyl-CoA = N-octadecanoylhexadecasphinganine + CoA + H(+). It carries out the reaction sphing-4-enine + octadecanoyl-CoA = N-octadecanoylsphing-4-enine + CoA + H(+). The enzyme catalyses heptadecasphing-4-enine + octadecanoyl-CoA = N-octadecanoyl-heptadecasphing-4-enine + CoA + H(+). The catalysed reaction is 2-hydroxyoctadecanoyl-CoA + sphinganine = N-(2-hydroxyoctadecanoyl)-sphinganine + CoA + H(+). It catalyses the reaction eicosanoyl-CoA + sphinganine = N-eicosanoylsphinganine + CoA + H(+). It functions in the pathway lipid metabolism; sphingolipid metabolism. Inhibited by fumonisin B1. In terms of biological role, ceramide synthase that catalyzes the transfer of the acyl chain from acyl-CoA to a sphingoid base, with high selectivity toward stearoyl-CoA (octadecanoyl-CoA; C18:0-CoA). N-acylates sphinganine and sphingosine bases to form dihydroceramides and ceramides in de novo synthesis and salvage pathways, respectively. Plays a predominant role in skeletal muscle in regulating C18 ceramide and dihydroceramide levels with an impact on whole-body glucose metabolism and insulin sensitivity. Protects from diet-induced obesity by suppressing the uptake of glucose in multiple organs in a FGF21-dependent way. Generates C18 ceramides in the brain, playing a critical role in cerebellar development and Purkinje cell function. In response to cellular stress mediates mitophagy, a known defense mechanism against cell transformation and aging. Upon mitochondria fission, generates C18 ceramides that anchor lipidated MAP1LC3B/LC3B-II autophagolysosomes to outer mitochondrial membranes to eliminate damaged mitochondria. In Homo sapiens (Human), this protein is Ceramide synthase 1.